Consider the following 93-residue polypeptide: YcgL domain-containing protein Ssed_2518 (93 aa).

Residues 1–85 (MICAVYKSRR…PKVNLLEQHK (85 aa)) enclose the YcgL domain.

This Shewanella sediminis (strain HAW-EB3) protein is YcgL domain-containing protein Ssed_2518.